The chain runs to 421 residues: Gamma-glutamyl phosphate reductase (421 aa).

This sequence belongs to the gamma-glutamyl phosphate reductase family.

The protein resides in the cytoplasm. The catalysed reaction is L-glutamate 5-semialdehyde + phosphate + NADP(+) = L-glutamyl 5-phosphate + NADPH + H(+). Its pathway is amino-acid biosynthesis; L-proline biosynthesis; L-glutamate 5-semialdehyde from L-glutamate: step 2/2. Functionally, catalyzes the NADPH-dependent reduction of L-glutamate 5-phosphate into L-glutamate 5-semialdehyde and phosphate. The product spontaneously undergoes cyclization to form 1-pyrroline-5-carboxylate. The polypeptide is Gamma-glutamyl phosphate reductase (Herminiimonas arsenicoxydans).